A 684-amino-acid polypeptide reads, in one-letter code: Transcriptional regulatory protein RCO1 (684 aa).

Met1 is modified (N-acetylmethionine). The disordered stretch occupies residues 1-48 (MDTSKKDTTRSPSHSNSSSPSSSSLSSSSSKEKKRPKRLSSQNVNYDL). Residues 10 to 29 (RSPSHSNSSSPSSSSLSSSS) are compositionally biased toward low complexity. The residue at position 68 (Ser68) is a Phosphoserine. A PHD-type 1 zinc finger spans residues 260 to 309 (EDFCSACNQSGSFLCCDTCPKSFHFLCLDPPIDPNNLPKGDWHCNECKFK). The PHD-type 2; atypical zinc finger occupies 414 to 472 (FLICYKCNQTRLGSWSHPENSRLIMTCDYCQTPWHLDCVPRASFKNLGSKWKCPLHSPT). Ser683 bears the Phosphoserine mark.

In terms of assembly, component of the RPD3C(S) complex composed of at least EAF3, RCO1, RPD3, SIN3, and UME1.

The protein localises to the nucleus. In terms of biological role, catalytic component of the RPD3C(S) histone deacetylase complex responsible for the deacetylation of lysine residues on the N-terminal part of the core histones (H2A, H2B, H3 and H4). Histone deacetylation gives a tag for epigenetic repression and plays an important role in transcriptional regulation, cell cycle progression, DNA damage response, osmotic stress response and developmental events. The polypeptide is Transcriptional regulatory protein RCO1 (RCO1) (Saccharomyces cerevisiae (strain ATCC 204508 / S288c) (Baker's yeast)).